Consider the following 508-residue polypeptide: ATP synthase subunit alpha, chloroplastic (508 aa).

172 to 179 (GDRQTGKT) serves as a coordination point for ATP.

The protein belongs to the ATPase alpha/beta chains family. F-type ATPases have 2 components, CF(1) - the catalytic core - and CF(0) - the membrane proton channel. CF(1) has five subunits: alpha(3), beta(3), gamma(1), delta(1), epsilon(1). CF(0) has four main subunits: a, b, b' and c.

The protein localises to the plastid. It is found in the chloroplast thylakoid membrane. It carries out the reaction ATP + H2O + 4 H(+)(in) = ADP + phosphate + 5 H(+)(out). In terms of biological role, produces ATP from ADP in the presence of a proton gradient across the membrane. The alpha chain is a regulatory subunit. This chain is ATP synthase subunit alpha, chloroplastic, found in Psilotum nudum (Whisk fern).